The following is a 429-amino-acid chain: Fc receptor-like protein 1 (429 aa).

Positions 1–16 (MLPRLLLLICAPLCEP) are cleaved as a signal peptide. Ig-like C2-type domains lie at 17 to 104 (AELF…SQIN), 109 to 200 (PVAD…VSIT), and 208 to 291 (PILM…EAVT). Residues 17-307 (AELFLIASPS…TGARSNHLTS (291 aa)) are Extracellular-facing. Disulfide bonds link Cys38–Cys86, Cys134–Cys183, and Cys229–Cys276. Asn293 carries an N-linked (GlcNAc...) asparagine glycan. The helical transmembrane segment at 308–328 (GVIEGLLSTLGPATVALLFCY) threads the bilayer. The Cytoplasmic portion of the chain corresponds to 329-429 (GLKRKIGRRS…ITDVDYEDAM (101 aa)). Short sequence motifs (ITIM motif) lie at residues 354 to 359 (FTYLNS), 367 to 372 (PIYENV), 379 to 384 (EVYSLA), 410 to 415 (DIYSRL), and 423 to 428 (VDYEDA).

In terms of assembly, interacts with ABL1. Interacts with GRB2 and SOS1. Interacts with SHIP-1/INPP5D. In terms of processing, phosphorylated on tyrosines upon activation. Primarily expressed in secondary lymphoid tissues by mature subsets of B-cells. Detected in spleen, lymph node, heart, skeletal muscle, kidney, liver and placenta. Specifically expressed by mature B lineage cells with higher expression in naive versus memory B-cells (at protein level).

It is found in the cell membrane. In terms of biological role, type I transmembrane surface glycoprotein preferentially expressed by B-cells that regulates BCR-mediated signaling responses. Recruits ABL1 as the intracellular effector molecule to enhance B-cell activation. Also plays a negative role by suppressing ERK activation under homeostatic and BCR-stimulated conditions in a GRB2-dependent manner. This chain is Fc receptor-like protein 1 (FCRL1), found in Homo sapiens (Human).